The following is a 2969-amino-acid chain: Histone-lysine N-methyltransferase ASH1L (2969 aa).

Disordered stretches follow at residues 1 to 70 (MDPR…TDAQ) and 118 to 143 (HPRKALKSGKMTDEKNEHCPSKRDPS). Residues 21 to 31 (KSPSAISTGTL) show a composition bias toward polar residues. The residue at position 22 (Ser-22) is a Phosphoserine. 2 stretches are compositionally biased toward basic and acidic residues: residues 33–65 (SKREVELEKNTKEEEDLRKRNRERNIEAGKDDG) and 127–143 (KMTDEKNEHCPSKRDPS). Lys-34 is covalently cross-linked (Glycyl lysine isopeptide (Lys-Gly) (interchain with G-Cter in SUMO2)). Residue Lys-375 is modified to N6-acetyllysine. Lys-425 is covalently cross-linked (Glycyl lysine isopeptide (Lys-Gly) (interchain with G-Cter in SUMO2)). A compositionally biased stretch (polar residues) spans 501–511 (IQQDSFSSSEK). Disordered regions lie at residues 501–525 (IQQDSFSSSEKGSYETSKHEKQPPV), 537–583 (ASDV…PNPL), 824–845 (YKPKRGRPKSKEMPQLEGPPKR), 878–966 (KQGL…EMEP), 1100–1128 (SEILPSPICSQSSGTSGGQSPVSSDAGFV), 1151–1231 (MKKA…EHVS), and 1243–1281 (SLKEKHKHKCKRRNHDYLSYDKMKRQKRKRKKKYPQLRN). Over residues 512–522 (GSYETSKHEKQ) the composition is skewed to basic and acidic residues. Positions 554 to 579 (NLPSPSPTVSVNPLTRSPPETSSQLA) are enriched in polar residues. The span at 887–897 (PKKRGRPKRQM) shows a compositional bias: basic residues. Residues 887–899 (PKKRGRPKRQMRS) constitute a DNA-binding region (a.T hook 1). Basic and acidic residues predominate over residues 920-932 (SKLESESDNHRSS). The segment covering 936–949 (FESEDQLQDPDDLD) has biased composition (acidic residues). Low complexity-rich tracts occupy residues 1100 to 1123 (SEILPSPICSQSSGTSGGQSPVSS) and 1162 to 1175 (SPPTLLPNSPSHLS). Phosphoserine occurs at positions 1162 and 1170. Residues 1186-1211 (SPISESHSDETIPSDSGIGTDNNSTS) are compositionally biased toward polar residues. Gln-1220 bears the N5-methylglutamine mark. 2 stretches are compositionally biased toward basic residues: residues 1246–1256 (EKHKHKCKRRN) and 1266–1277 (KRQKRKRKKKYP). Positions 1347-1359 (KKKRGRPPKMREA) form a DNA-binding region, a.T hook 2. Disordered regions lie at residues 1489 to 1508 (HREHRSSEQPQVSMDTGSSR), 1580 to 1711 (SESS…ASGD), and 1741 to 1761 (ASAPPSSSPGRSHSKDRTLGK). Polar residues-rich tracts occupy residues 1496–1508 (EQPQVSMDTGSSR), 1580–1598 (SESSPSLSLGGFTPNSEPA), 1605–1622 (NLFTSAIGSCRVSNPNSS), and 1650–1680 (LPSNERAVQTLAGSQPTSDKPSQRPSESTNC). Over residues 1741–1751 (ASAPPSSSPGR) the composition is skewed to low complexity. Residues 1847 to 1859 (KRRPGRPRKCPLQ) constitute a DNA-binding region (a.T hook 3). The segment at 1911-1991 (KKGLKRKGWL…PRPPKKKYQK (81 aa)) is disordered. Residues 2069 to 2288 (PDVPLYKKIR…KCRGIIGGKS (220 aa)) form a catalytic domain region. The 52-residue stretch at 2091–2142 (YEATTCNCKKPDDDTRKGCVDDCLNRMIFAECSPNTCPCGEQCCNQRIQRHE) folds into the AWS domain. One can recognise an SET domain in the interval 2145–2261 (QCLERFRAEE…AGTELTYDYN (117 aa)). The 17-residue stretch at 2269–2285 (KQQLCKCGFEKCRGIIG) folds into the Post-SET domain. Residues 2288–2346 (SQRVNGLTSSKNSQPMATHKKSGRSKEKRKSKHKLKKRRGHLSEEPSENINTPTRLTPQ) form a disordered region. The span at 2289-2303 (QRVNGLTSSKNSQPM) shows a compositional bias: polar residues. The span at 2305–2327 (THKKSGRSKEKRKSKHKLKKRRG) shows a compositional bias: basic residues. An N6-acetyllysine mark is found at Lys-2317, Lys-2319, and Lys-2323. Residues 2335-2346 (ENINTPTRLTPQ) show a composition bias toward polar residues. The region spanning 2444–2550 (RLAQIFKEIC…KAYYNARHEA (107 aa)) is the Bromo domain. A PHD-type zinc finger spans residues 2585-2631 (VIRCICGLYKDEGLMIQCDKCMVWQHCDCMGVNSDVEHYLCEQCDPR). The 138-residue stretch at 2661 to 2798 (LLLRQGDCVY…KSAHLFYKIH (138 aa)) folds into the BAH domain. Disordered stretches follow at residues 2825–2856 (SPHYVPDNYKRNGGRSSWKSERSKPPLKDLGQ) and 2876–2919 (NEIP…RRHN). Positions 2842–2855 (WKSERSKPPLKDLG) are enriched in basic and acidic residues.

The protein belongs to the class V-like SAM-binding methyltransferase superfamily. Histone-lysine methyltransferase family. SET2 subfamily. In terms of processing, methylated at Gln-1220 by N6AMT1. As to expression, widely expressed, with highest level in brain, heart and kidney.

It is found in the nucleus. The protein localises to the cell junction. Its subcellular location is the tight junction. It localises to the chromosome. It catalyses the reaction L-lysyl(36)-[histone H3] + 3 S-adenosyl-L-methionine = N(6),N(6),N(6)-trimethyl-L-lysyl(36)-[histone H3] + 3 S-adenosyl-L-homocysteine + 3 H(+). The enzyme catalyses L-lysyl(9)-[histone H3] + S-adenosyl-L-methionine = N(6)-methyl-L-lysyl(9)-[histone H3] + S-adenosyl-L-homocysteine + H(+). Its function is as follows. Histone methyltransferase specifically trimethylating 'Lys-36' of histone H3 forming H3K36me3. Also monomethylates 'Lys-9' of histone H3 (H3K9me1) in vitro. The physiological significance of the H3K9me1 activity is unclear. The protein is Histone-lysine N-methyltransferase ASH1L (ASH1L) of Homo sapiens (Human).